Reading from the N-terminus, the 74-residue chain is Exodeoxyribonuclease 7 small subunit (74 aa).

It belongs to the XseB family. As to quaternary structure, heterooligomer composed of large and small subunits.

The protein localises to the cytoplasm. It catalyses the reaction Exonucleolytic cleavage in either 5'- to 3'- or 3'- to 5'-direction to yield nucleoside 5'-phosphates.. Bidirectionally degrades single-stranded DNA into large acid-insoluble oligonucleotides, which are then degraded further into small acid-soluble oligonucleotides. The protein is Exodeoxyribonuclease 7 small subunit of Vesicomyosocius okutanii subsp. Calyptogena okutanii (strain HA).